The chain runs to 340 residues: Photosystem II protein D1 (340 aa).

The next 3 helical transmembrane spans lie at 25–42 (YIGWFGLLVFPLLSLATV), 114–129 (HFFLGVCGWMGREWEF), and 138–152 (WIFVAFSAPIAAAAA). Histidine 114 contacts chlorophyll a. Tryptophan 122 contacts pheophytin a. Positions 166 and 185 each coordinate [CaMn4O5] cluster. A helical transmembrane segment spans residues 193–214 (FHILGVAGVFGGSLFSAMHGSL). Residue histidine 194 participates in chlorophyll a binding. Residues histidine 211 and 260–261 (SF) contribute to the a quinone site. A Fe cation-binding site is contributed by histidine 211. Residue histidine 268 coordinates Fe cation. Residues 270-284 (FLAAWPVIGIWFTSL) form a helical membrane-spanning segment. [CaMn4O5] cluster is bound by residues histidine 328, glutamate 329, aspartate 338, and alanine 340.

This sequence belongs to the reaction center PufL/M/PsbA/D family. In terms of assembly, PSII is composed of 1 copy each of membrane proteins PsbA, PsbB, PsbC, PsbD, PsbE, PsbF, PsbH, PsbI, PsbJ, PsbK, PsbL, PsbM, PsbT, PsbX, PsbY, PsbZ, Psb30/Ycf12, at least 3 peripheral proteins of the oxygen-evolving complex and a large number of cofactors. It forms dimeric complexes. It depends on The D1/D2 heterodimer binds P680, chlorophylls that are the primary electron donor of PSII, and subsequent electron acceptors. It shares a non-heme iron and each subunit binds pheophytin, quinone, additional chlorophylls, carotenoids and lipids. D1 provides most of the ligands for the Mn4-Ca-O5 cluster of the oxygen-evolving complex (OEC). There is also a Cl(-1) ion associated with D1 and D2, which is required for oxygen evolution. The PSII complex binds additional chlorophylls, carotenoids and specific lipids. as a cofactor. Post-translationally, tyr-157 forms a radical intermediate that is referred to as redox-active TyrZ, YZ or Y-Z.

It is found in the plastid. The protein localises to the chloroplast thylakoid membrane. It catalyses the reaction 2 a plastoquinone + 4 hnu + 2 H2O = 2 a plastoquinol + O2. Functionally, photosystem II (PSII) is a light-driven water:plastoquinone oxidoreductase that uses light energy to abstract electrons from H(2)O, generating O(2) and a proton gradient subsequently used for ATP formation. It consists of a core antenna complex that captures photons, and an electron transfer chain that converts photonic excitation into a charge separation. The D1/D2 (PsbA/PsbD) reaction center heterodimer binds P680, the primary electron donor of PSII as well as several subsequent electron acceptors. This Amphidinium operculatum (Dinoflagellate) protein is Photosystem II protein D1.